We begin with the raw amino-acid sequence, 156 residues long: Protein US1 (156 aa).

Disordered regions lie at residues 90 to 114 (RSRS…SDGD) and 133 to 156 (ARRW…DSTS). A compositionally biased stretch (low complexity) spans 96 to 111 (AESGRSSSSSSVSVLS). The segment covering 147–156 (SQQAKNDSTS) has biased composition (polar residues).

The chain is Protein US1 (US1) from Homo sapiens (Human).